A 140-amino-acid polypeptide reads, in one-letter code: HTH-type transcriptional regulator AdhR (140 aa).

The HTH merR-type domain occupies 1 to 69 (MNIAQVAKQF…IEALIEYTTL (69 aa)). A DNA-binding region (H-T-H motif) is located at residues 3–22 (IAQVAKQFGLTAATLRYYER). Positions 75–125 (RTVEARKNILADERQRLIEKRKEIDETIKRLDTKIKDYDGKLRENEAKLKS) form a coiled coil. Residues 120–140 (EAKLKSRPKTESLHGSVEQRR) are disordered.

Transcriptional regulator involved in the response to aldehyde stress. Binds to the promoter region of the adhA-yraA operon, the yraC and its own promoter region; binding is unchanged in the presence of aldehydes. The chain is HTH-type transcriptional regulator AdhR (adhR) from Bacillus subtilis (strain 168).